The sequence spans 318 residues: Basic leucine zipper (bZIP) transcription factor atfB (318 aa).

The disordered stretch occupies residues 114–157; sequence FNSSPPEYAPPKHRSSLSEQSQTDGYGVSTRRRKASAIDQCEQQ. The segment at 160 to 199 is basic motif; sequence REKREKFLERNRLAASKCRQKKKEHTKLLETRFREVSNKK. Positions 160 to 223 constitute a bZIP domain; sequence REKREKFLER…LNLKNEMLRH (64 aa). Residues 202–216 form a leucine-zipper region; that stretch reads LESEIEHLRSEVLNL. A disordered region spans residues 275 to 301; sequence DGPMQLPSEMGSPLDQRRDSEQSIMTE.

It belongs to the bZIP family. ATF subfamily.

It localises to the nucleus. Functionally, transcription factor that acts as a key player in the regulatory circuit that integrates secondary metabolism and cellular response to oxidative stress. Regulates the genes involved in development and stress response through direct binding to their promoters. Particularly involved in the resistance to oxidative stress in asexual conidiospores. This Aspergillus oryzae (strain ATCC 42149 / RIB 40) (Yellow koji mold) protein is Basic leucine zipper (bZIP) transcription factor atfB.